Reading from the N-terminus, the 227-residue chain is MSKSRSLVRLLQLASPMLPVGAYSYSQGLEWGIESGEVHDLESAQAWIGDVLQVYQGGFELPVLSRCYRAWQRGDVEALNEWNAFYLAGRDNAEALAESRQMGYSLKRLLLEFEELSGAWATMLEALPNASFPALYAGISQAWEIEEQDALQAYAWSWLENQASAAMKAVPLGQVAGQKILLGVAGKIPVLVEAAIQMQDHEISNFCPALTIAGCRHETQYSRLFRS.

It belongs to the UreF family. In terms of assembly, ureD, UreF and UreG form a complex that acts as a GTP-hydrolysis-dependent molecular chaperone, activating the urease apoprotein by helping to assemble the nickel containing metallocenter of UreC. The UreE protein probably delivers the nickel.

The protein resides in the cytoplasm. Required for maturation of urease via the functional incorporation of the urease nickel metallocenter. In Methylobacillus flagellatus (strain ATCC 51484 / DSM 6875 / VKM B-1610 / KT), this protein is Urease accessory protein UreF.